The sequence spans 179 residues: Inosine/xanthosine triphosphatase (179 aa).

E71 serves as a coordination point for Mg(2+). 71-72 (EA) provides a ligand contact to substrate.

This sequence belongs to the YjjX NTPase family. In terms of assembly, homodimer. Requires Mg(2+) as cofactor. Mn(2+) is required as a cofactor.

The catalysed reaction is XTP + H2O = XDP + phosphate + H(+). The enzyme catalyses ITP + H2O = IDP + phosphate + H(+). In terms of biological role, phosphatase that hydrolyzes non-canonical purine nucleotides such as XTP and ITP to their respective diphosphate derivatives. Probably excludes non-canonical purines from DNA/RNA precursor pool, thus preventing their incorporation into DNA/RNA and avoiding chromosomal lesions. The polypeptide is Inosine/xanthosine triphosphatase (Shewanella sp. (strain ANA-3)).